We begin with the raw amino-acid sequence, 186 residues long: Adenylate kinase (186 aa).

An ATP-binding site is contributed by 14-19 (GAGKGT). The tract at residues 34-63 (STGDILRDHVARGTPLGERVRPIMERGDLV) is NMP. AMP-binding positions include T35, R40, 61 to 63 (DLV), 84 to 87 (GFPR), and Q91. Residues 125–135 (RRAELEGRSDD) form an LID region. Residue R126 participates in ATP binding. AMP-binding residues include R132 and R143. G171 serves as a coordination point for ATP.

This sequence belongs to the adenylate kinase family. Monomer.

It is found in the cytoplasm. The catalysed reaction is AMP + ATP = 2 ADP. It participates in purine metabolism; AMP biosynthesis via salvage pathway; AMP from ADP: step 1/1. Catalyzes the reversible transfer of the terminal phosphate group between ATP and AMP. Plays an important role in cellular energy homeostasis and in adenine nucleotide metabolism. The polypeptide is Adenylate kinase (Thermus thermophilus (strain ATCC BAA-163 / DSM 7039 / HB27)).